A 367-amino-acid chain; its full sequence is Protein-glutamate methylesterase/protein-glutamine glutaminase 2 (367 aa).

Residues 15 to 132 (RALIVDDSAL…SQSMHEMAEE (118 aa)) form the Response regulatory domain. Asp-66 is subject to 4-aspartylphosphate. The region spanning 172–367 (KTSVRNVLAI…MADEIVKIVR (196 aa)) is the CheB-type methylesterase domain. Catalysis depends on residues Ser-184, His-211, and Asp-311.

The protein belongs to the CheB family. In terms of processing, phosphorylated by CheA. Phosphorylation of the N-terminal regulatory domain activates the methylesterase activity.

The protein localises to the cytoplasm. The catalysed reaction is [protein]-L-glutamate 5-O-methyl ester + H2O = L-glutamyl-[protein] + methanol + H(+). The enzyme catalyses L-glutaminyl-[protein] + H2O = L-glutamyl-[protein] + NH4(+). Its function is as follows. Involved in chemotaxis. Part of a chemotaxis signal transduction system that modulates chemotaxis in response to various stimuli. Catalyzes the demethylation of specific methylglutamate residues introduced into the chemoreceptors (methyl-accepting chemotaxis proteins or MCP) by CheR. Also mediates the irreversible deamidation of specific glutamine residues to glutamic acid. This Methanosarcina mazei (strain ATCC BAA-159 / DSM 3647 / Goe1 / Go1 / JCM 11833 / OCM 88) (Methanosarcina frisia) protein is Protein-glutamate methylesterase/protein-glutamine glutaminase 2.